Consider the following 200-residue polypeptide: MSQSNQPDSPVTQTQAEEAVRTLLRWAGEDPTREGLLDTPRRVAEAYGDWFSGYRDEPREYLERTFEEVAGYDELIVLRDISYESHCEHHMAPIIGKVHVGYLPRGKVVGISKLARVVESYARRFQVQEKMTAQIAQCIQDVLQPLGVGVVVEGAHECMTTRGIHKRGVSMVTSKMLGSFREDARTRAEFLQFIEVGGKR.

3 residues coordinate Zn(2+): Cys-87, His-90, and Cys-158.

This sequence belongs to the GTP cyclohydrolase I family. As to quaternary structure, toroid-shaped homodecamer, composed of two pentamers of five dimers.

It catalyses the reaction GTP + H2O = 7,8-dihydroneopterin 3'-triphosphate + formate + H(+). It functions in the pathway cofactor biosynthesis; 7,8-dihydroneopterin triphosphate biosynthesis; 7,8-dihydroneopterin triphosphate from GTP: step 1/1. This chain is GTP cyclohydrolase 1, found in Xanthomonas axonopodis pv. citri (strain 306).